The chain runs to 92 residues: Protein canopy homolog 1 (92 aa).

It belongs to the canopy family.

This Homo sapiens (Human) protein is Protein canopy homolog 1 (CNPY1).